We begin with the raw amino-acid sequence, 599 residues long: Aspartate--tRNA ligase (599 aa).

Glu-180 contacts L-aspartate. Residues 204-207 are aspartate; the sequence is QIFK. Arg-226 serves as a coordination point for L-aspartate. Residues 226–228 and Gln-235 contribute to the ATP site; that span reads RDE. An L-aspartate-binding site is contributed by His-454. An ATP-binding site is contributed by Glu-488. Arg-495 contacts L-aspartate. Position 540-543 (540-543) interacts with ATP; the sequence is GLDR.

The protein belongs to the class-II aminoacyl-tRNA synthetase family. Type 1 subfamily. In terms of assembly, homodimer.

It is found in the cytoplasm. The catalysed reaction is tRNA(Asp) + L-aspartate + ATP = L-aspartyl-tRNA(Asp) + AMP + diphosphate. Functionally, catalyzes the attachment of L-aspartate to tRNA(Asp) in a two-step reaction: L-aspartate is first activated by ATP to form Asp-AMP and then transferred to the acceptor end of tRNA(Asp). The sequence is that of Aspartate--tRNA ligase from Clostridium beijerinckii (strain ATCC 51743 / NCIMB 8052) (Clostridium acetobutylicum).